A 427-amino-acid polypeptide reads, in one-letter code: Serine/threonine-protein kinase ssn3 (427 aa).

One can recognise a Protein kinase domain in the interval 40–369 (YHIVGFISSG…AQEALEHPYF (330 aa)). Residues 46 to 54 (ISSGTYGRV) and Lys70 contribute to the ATP site. Residue Asp172 is the Proton acceptor of the active site. Residues 390–399 (RRVTQDDNDI) are compositionally biased toward basic and acidic residues. The tract at residues 390–427 (RRVTQDDNDIRSGSLPGTKRSGLPDDSLLGRATKRLKE) is disordered.

It belongs to the protein kinase superfamily. CMGC Ser/Thr protein kinase family. CDC2/CDKX subfamily. Component of the srb8-11 complex, a regulatory module of the Mediator complex. Requires Mg(2+) as cofactor.

Its subcellular location is the nucleus. The enzyme catalyses L-seryl-[protein] + ATP = O-phospho-L-seryl-[protein] + ADP + H(+). The catalysed reaction is L-threonyl-[protein] + ATP = O-phospho-L-threonyl-[protein] + ADP + H(+). It catalyses the reaction [DNA-directed RNA polymerase] + ATP = phospho-[DNA-directed RNA polymerase] + ADP + H(+). Functionally, component of the srb8-11 complex. The srb8-11 complex is a regulatory module of the Mediator complex which is itself involved in regulation of basal and activated RNA polymerase II-dependent transcription. The srb8-11 complex may be involved in the transcriptional repression of a subset of genes regulated by Mediator. It may inhibit the association of the Mediator complex with RNA polymerase II to form the holoenzyme complex. The srb8-11 complex phosphorylates the C-terminal domain (CTD) of the largest subunit of RNA polymerase II. The polypeptide is Serine/threonine-protein kinase ssn3 (ssn3) (Aspergillus niger (strain ATCC MYA-4892 / CBS 513.88 / FGSC A1513)).